A 246-amino-acid polypeptide reads, in one-letter code: mRNA-decapping protein g5R (246 aa).

One can recognise a Nudix hydrolase domain in the interval 93-239 (QKFRKNWLLP…IIGPAFNFIK (147 aa)). The Nudix box motif lies at 128–149 (GKPKEDESDLTCAIREFEEETG). Residue glutamate 134 coordinates Mg(2+). The Nucleophile role is filled by glutamate 143. Positions 147 and 169 each coordinate Mg(2+).

The protein belongs to the Nudix hydrolase family. DIPP subfamily. In terms of assembly, interacts with host RPL23A. Mg(2+) serves as cofactor. The cofactor is Mn(2+).

It localises to the host rough endoplasmic reticulum. It carries out the reaction diphospho-myo-inositol polyphosphate + H2O = myo-inositol polyphosphate + phosphate.. Its function is as follows. Decapping enzyme required for the removal of the 5'-end m7GpppN cap tethered to viral and host mRNAs to allow their decay in cells. May therefore accelerate viral and cellular mRNA turnover to eliminate competing host mRNAs and allow stage-specific synthesis of viral proteins. Acceleration of the turnover of cellular transcripts may even promote the shutoff of host protein synthesis. In addition to the mRNA cap, g5R also efficiently hydrolyzes diphosphoinositol polyphosphates. Down-regulation of the level of PP-InsP5 (diphosphoinositol pentakisphosphate) may play a role in viral manipulation of the cellular secretory pathway, a step necessary for the formation of virions. Binds viral and cellular poly(A) mRNAs, thereby decreasing both types of mRNAs. The polypeptide is mRNA-decapping protein g5R (African swine fever virus (isolate Warthog/Namibia/Wart80/1980) (ASFV)).